The primary structure comprises 583 residues: SHC-transforming protein 1 (583 aa).

At M1 the chain carries N-acetylmethionine. 2 disordered regions span residues 1 to 92 (MDLL…DDGE) and 113 to 137 (KLSG…WTRH). The segment covering 16-44 (ESLSSLEEGASGSTPPEELPSPSASSLGP) has biased composition (low complexity). A Phosphoserine modification is found at S36. A Phosphoserine modification is found at S139. K154 carries the N6-acetyllysine modification. One can recognise a PID domain in the interval 156 to 339 (MGPGVSYLVR…AGFDGSAWDE (184 aa)). Positions 340–487 (EEEEPPDHQY…SMAEQLRGEP (148 aa)) are CH1. Phosphotyrosine is present on residues Y349 and Y350. Residues 372-416 (AAPGAARSTAPSAQTPSHLGATLPVGQPVGGDPEVRKQMPPPPPC) form a disordered region. Y427 is modified (phosphotyrosine). Phosphoserine is present on S453. In terms of domain architecture, SH2 spans 488–579 (WFHGKLSRRE…GSELCLQQPV (92 aa)).

In terms of assembly, interacts with CPNE3; this interaction may mediate the binding of CPNE3 with ERBB2. Interacts with the Trk receptors NTRK1, NTRK2 and NTRK3; in a phosphotyrosine-dependent manner. Interacts with the NPXY motif of tyrosine-phosphorylated IGF1R and INSR in vitro via the PID domain. Once activated, binds to GRB2. Interacts with tyrosine-phosphorylated CD3T and DDR2. Interacts with the N-terminal region of APS. Interacts with phosphorylated LRP1 and IRS4. Interacts with INPP5D/SHIP1 and INPPL1/SHIP2. Interacts with ALK, GAB2, GRB7 and KIT. Interacts with PTPN6/SHP (tyrosine phosphorylated). Identified in a complex containing FGFR4, NCAM1, CDH2, PLCG1, FRS2, SRC, SHC1, GAP43 and CTTN. Interacts with FLT4 (tyrosine-phosphorylated). Interacts with EPHB1 and GRB2; activates the MAPK/ERK cascade to regulate cell migration. Interacts with PDGFRB (tyrosine-phosphorylated). Interacts with ERBB4. Interacts with TEK/TIE2 (tyrosine-phosphorylated). Interacts with PTK2/FAK1. Interacts with CEACAM1; this interaction is CEACAM1-phosphorylation-dependent and mediates interaction with EGFR or INSR resulting in decrease coupling of SHC1 to the MAPK3/ERK1-MAPK1/ERK2 pathway. Interacts (via PID domain) with PEAK1 (when phosphorylated). Found in a complex with PPP1CA, PPP1CC, SHC1 and PEAK1. Phosphorylated by activated epidermal growth factor receptor. Phosphorylated in response to KIT signaling. Tyrosine phosphorylated in response to FLT3 and FLT4 signaling and by ligand-activated ALK. Tyrosine phosphorylated by ligand-activated PDGFRB. Tyrosine phosphorylated by TEK/TIE2. May be tyrosine phosphorylated by activated PTK2/FAK1. Tyrosine phosphorylated by activated PTK2B/PYK2. Dephosphorylation by PTPN2 may regulate interaction with GRB2.

It localises to the cytoplasm. Its subcellular location is the cell junction. The protein localises to the focal adhesion. Its function is as follows. Signaling adapter that couples activated growth factor receptors to signaling pathways. Participates in a signaling cascade initiated by activated KIT and KITLG/SCF. Participates in signaling downstream of the angiopoietin receptor TEK/TIE2, and plays a role in the regulation of endothelial cell migration and sprouting angiogenesis. The protein is SHC-transforming protein 1 (SHC1) of Pongo abelii (Sumatran orangutan).